Consider the following 303-residue polypeptide: Acetaldehyde dehydrogenase (303 aa).

The active-site Acyl-thioester intermediate is the cysteine 130. NAD(+) is bound by residues 161 to 169 (SVGPGTRKN) and asparagine 272.

The protein belongs to the acetaldehyde dehydrogenase family.

It catalyses the reaction acetaldehyde + NAD(+) + CoA = acetyl-CoA + NADH + H(+). This is Acetaldehyde dehydrogenase from Verminephrobacter eiseniae (strain EF01-2).